The primary structure comprises 95 residues: Co-chaperonin GroES (95 aa).

The protein belongs to the GroES chaperonin family. In terms of assembly, heptamer of 7 subunits arranged in a ring. Interacts with the chaperonin GroEL.

It localises to the cytoplasm. Functionally, together with the chaperonin GroEL, plays an essential role in assisting protein folding. The GroEL-GroES system forms a nano-cage that allows encapsulation of the non-native substrate proteins and provides a physical environment optimized to promote and accelerate protein folding. GroES binds to the apical surface of the GroEL ring, thereby capping the opening of the GroEL channel. The polypeptide is Co-chaperonin GroES (Chlorobium luteolum (strain DSM 273 / BCRC 81028 / 2530) (Pelodictyon luteolum)).